The following is a 288-amino-acid chain: Solute carrier family 25 member 47-B (288 aa).

3 Solcar repeats span residues 1–83 (MHLA…ILQF), 99–191 (AHIF…ICEI), and 199–286 (PGWP…VVRL). 6 helical membrane passes run 3–23 (LADF…GYPL), 58–75 (GMSM…LVFG), 101–121 (IFLA…PADI), 175–195 (GPSF…LTTE), 199–219 (PGWP…WAVG), and 257–277 (VLFR…MSVF).

Belongs to the mitochondrial carrier (TC 2.A.29) family.

The protein resides in the mitochondrion inner membrane. The chain is Solute carrier family 25 member 47-B (slc25a47b) from Danio rerio (Zebrafish).